The following is a 166-amino-acid chain: Mitochondrial inner membrane protease subunit 1 (166 aa).

Active-site residues include Ser40 and Lys83.

This sequence belongs to the peptidase S26 family. IMP1 subfamily. As to quaternary structure, heterodimer of 2 subunits, IMMPL1 and IMMPL2.

The protein localises to the mitochondrion inner membrane. In terms of biological role, catalyzes the removal of transit peptides required for the targeting of proteins from the mitochondrial matrix, across the inner membrane, into the inter-membrane space. Known to process the nuclear encoded protein DIABLO. This chain is Mitochondrial inner membrane protease subunit 1 (Immp1l), found in Mus musculus (Mouse).